Consider the following 66-residue polypeptide: Large ribosomal subunit protein uL29 (66 aa).

The protein belongs to the universal ribosomal protein uL29 family.

The chain is Large ribosomal subunit protein uL29 from Geobacillus thermodenitrificans (strain NG80-2).